The sequence spans 137 residues: UPF0275 protein PM0489 (137 aa).

This sequence belongs to the UPF0275 family.

The polypeptide is UPF0275 protein PM0489 (Pasteurella multocida (strain Pm70)).